The following is a 651-amino-acid chain: PTS system N-acetylglucosamine-specific EIICBA component (651 aa).

The PTS EIIC type-1 domain maps to methionine 1 to aspartate 371. 12 helical membrane passes run leucine 16–leucine 36, phenylalanine 40–valine 60, glycine 70–isoleucine 90, proline 92–tyrosine 112, phenylalanine 132–tryptophan 152, tryptophan 165–isoleucine 185, valine 192–phenylalanine 212, glycine 232–alanine 252, leucine 264–phenylalanine 284, leucine 285–isoleucine 305, alanine 308–tyrosine 328, and methionine 339–isoleucine 359. The PTS EIIB type-1 domain occupies threonine 390–alanine 472. The active-site Phosphocysteine intermediate; for EIIB activity is the cysteine 412. Phosphocysteine; by EIIA is present on cysteine 412. One can recognise a PTS EIIA type-1 domain in the interval aspartate 519–asparagine 623. Zn(2+) contacts are provided by histidine 556 and histidine 571. Histidine 571 functions as the Tele-phosphohistidine intermediate; for EIIA activity in the catalytic mechanism. The residue at position 571 (histidine 571) is a Phosphohistidine; by HPr.

The cofactor is Zn(2+).

Its subcellular location is the cell inner membrane. It carries out the reaction N(pros)-phospho-L-histidyl-[protein] + N-acetyl-D-glucosamine(out) = N-acetyl-D-glucosamine 6-phosphate(in) + L-histidyl-[protein]. Its function is as follows. The phosphoenolpyruvate-dependent sugar phosphotransferase system (sugar PTS), a major carbohydrate active transport system, catalyzes the phosphorylation of incoming sugar substrates concomitantly with their translocation across the cell membrane. This system is involved in N-acetylglucosamine transport. The polypeptide is PTS system N-acetylglucosamine-specific EIICBA component (nagE) (Klebsiella pneumoniae).